The following is a 161-amino-acid chain: Nucleotide-binding protein Swoo_3646 (161 aa).

This sequence belongs to the YajQ family.

Functionally, nucleotide-binding protein. In Shewanella woodyi (strain ATCC 51908 / MS32), this protein is Nucleotide-binding protein Swoo_3646.